We begin with the raw amino-acid sequence, 486 residues long: MSSLEQFVQVVIDSPSPYTNLDRIYVHNRILGLVGEDQPVEATDEQVTSLVDALVKTAVQNGKIEDAQSDRSILADQLMDLVTPLPSILNQRFWDKYQVSPKAATDYFFNLSKTNDYIKTRAIAKNVSFPAETDFGELEITINLSKPEKDPKAIAAARNQPQDGYPLCQLCMQNEGYLGRLGYPSRSNHRIIRMTLGGETWGFQYSPYAYFNEHSIFLDQIHRPMVINRQTFTNLLEIVKQLPHYFVGSNADLPIVGGSMLSHEHYQGGRHVFPMMKAPIARTIDLGVAGVEAGIVKWPMSTIRLVGSDVVALTDAAVKIHDAWMNYSDESVDVRAFTDGTRHHTTTPIAYKDGENYVLDVVLRDNQTSAEFPDGIFHPHQDVQHIKKENIGLIEVMGRAILPARLKTELVEVEKYLLGQTNQMAEMHQAWADQLKATNSITAENVTAVVNAAVGNVFARVLADAGVFKWDDAGEAAFARFISAIN.

This sequence belongs to the galactose-1-phosphate uridylyltransferase type 2 family.

It is found in the cytoplasm. The catalysed reaction is alpha-D-galactose 1-phosphate + UDP-alpha-D-glucose = alpha-D-glucose 1-phosphate + UDP-alpha-D-galactose. It participates in carbohydrate metabolism; galactose metabolism. The sequence is that of Galactose-1-phosphate uridylyltransferase from Pediococcus pentosaceus (strain ATCC 25745 / CCUG 21536 / LMG 10740 / 183-1w).